Consider the following 218-residue polypeptide: Pyridoxine/pyridoxamine 5'-phosphate oxidase (218 aa).

Residues 14–17 (RREY) and lysine 72 each bind substrate. FMN-binding positions include 67–72 (RIVLLK), 82–83 (YT), arginine 88, lysine 89, and glutamine 111. Residues tyrosine 129, arginine 133, and serine 137 each contribute to the substrate site. FMN contacts are provided by residues 146-147 (QS) and tryptophan 191. Residue 197–199 (RLH) participates in substrate binding. Arginine 201 serves as a coordination point for FMN.

This sequence belongs to the pyridoxamine 5'-phosphate oxidase family. As to quaternary structure, homodimer. FMN is required as a cofactor.

The catalysed reaction is pyridoxamine 5'-phosphate + O2 + H2O = pyridoxal 5'-phosphate + H2O2 + NH4(+). It carries out the reaction pyridoxine 5'-phosphate + O2 = pyridoxal 5'-phosphate + H2O2. It functions in the pathway cofactor metabolism; pyridoxal 5'-phosphate salvage; pyridoxal 5'-phosphate from pyridoxamine 5'-phosphate: step 1/1. Its pathway is cofactor metabolism; pyridoxal 5'-phosphate salvage; pyridoxal 5'-phosphate from pyridoxine 5'-phosphate: step 1/1. Its function is as follows. Catalyzes the oxidation of either pyridoxine 5'-phosphate (PNP) or pyridoxamine 5'-phosphate (PMP) into pyridoxal 5'-phosphate (PLP). In Salmonella paratyphi B (strain ATCC BAA-1250 / SPB7), this protein is Pyridoxine/pyridoxamine 5'-phosphate oxidase.